A 1233-amino-acid polypeptide reads, in one-letter code: Structural maintenance of chromosomes protein 1A (1233 aa).

Residue 32-39 (GPNGSGKS) coordinates ATP. Coiled coils occupy residues 104 to 124 (EYKI…LEKL) and 163 to 503 (ELAQ…KAEI). Positions 284–293 (IKEKDSELNQ) are enriched in basic and acidic residues. Disordered regions lie at residues 284–307 (IKEK…NTSH) and 350–369 (FEER…TLEE). Phosphoserine is present on residues Ser-358 and Ser-360. Residues 515–629 (VYGRLIDLCQ…DNVEDARRIA (115 aa)) form the SMC hinge domain. N6-acetyllysine is present on residues Lys-648 and Lys-713. Residues 660-935 (KAKARRWDEK…RHNLLQACKM (276 aa)) are a coiled coil. A disordered region spans residues 946–969 (TMDDISQEEGGSQGEESVSGSQRT). Over residues 953–967 (EEGGSQGEESVSGSQ) the composition is skewed to low complexity. Phosphoserine occurs at positions 957, 962, 966, and 970. The stretch at 991 to 1068 (KDAQAEEEIK…FEQIKKERFD (78 aa)) forms a coiled coil. Lys-1037 is subject to N6-acetyllysine.

It belongs to the SMC family. SMC1 subfamily. Forms a heterodimer with SMC3 in cohesin complexes. Cohesin complexes are composed of the SMC1 (SMC1A or meiosis-specific SMC1B) and SMC3 heterodimer attached via their SMC hinge domain, RAD21 which link them, and one STAG protein (STAG1, STAG2 or meiosis-specific STAG3), which interacts with RAD21. In germ cell cohesin complexes, SMC1A is mutually exclusive with SMC1B. Found in a complex with CDCA5, SMC3 and RAD21, PDS5A/SCC-112 and PDS5B/APRIN. Interacts with STAG3, NDC80, BRAC1, BRAT1 and RPGR. Found in a complex containing POLE and SMC3. The cohesin complex interacts with the cohesin loading complex subunits NIPBL/Scc2 (via HEAT repeats) and MAU2/Scc4. NIPBL directly contacts all members of the complex, RAD21, SMC1A/B, SMC3 and STAG1. Interacts with SYCP2. In terms of processing, phosphorylated upon ionizing radiation or DNA methylation. Phosphorylation of Ser-957 and Ser-966 activates it and is required for S-phase checkpoint activation. Ubiquitinated by the DCX(DCAF15) complex, leading to its degradation.

The protein localises to the nucleus. The protein resides in the chromosome. Involved in chromosome cohesion during cell cycle and in DNA repair. Central component of cohesin complex. The cohesin complex is required for the cohesion of sister chromatids after DNA replication. The cohesin complex apparently forms a large proteinaceous ring within which sister chromatids can be trapped. At anaphase, the complex is cleaved and dissociates from chromatin, allowing sister chromatids to segregate. The cohesin complex may also play a role in spindle pole assembly during mitosis. Involved in DNA repair via its interaction with BRCA1 and its related phosphorylation by ATM, or via its phosphorylation by ATR. Works as a downstream effector both in the ATM/NBS1 branch and in the ATR/MSH2 branch of S-phase checkpoint. This chain is Structural maintenance of chromosomes protein 1A (Smc1a), found in Rattus norvegicus (Rat).